A 181-amino-acid chain; its full sequence is Probable mitochondrial import inner membrane translocase subunit tim-17B.1 (181 aa).

3 helical membrane passes run 17–37 (IGSA…FGGY), 61–81 (GVQF…LVAI), and 109–129 (VMAG…GVGL). Residues 137-181 (AMMDPTQPPPEALDDPRSLGQKSQAEPGLDQTRPFGIPTGLPNLS) are disordered.

This sequence belongs to the Tim17/Tim22/Tim23 family.

The protein resides in the mitochondrion inner membrane. Essential component of the TIM23 complex, a complex that mediates the translocation of transit peptide-containing proteins across the mitochondrial inner membrane. This Caenorhabditis elegans protein is Probable mitochondrial import inner membrane translocase subunit tim-17B.1.